We begin with the raw amino-acid sequence, 410 residues long: Peptidase T (410 aa).

Residue histidine 78 participates in Zn(2+) binding. The active site involves aspartate 80. Aspartate 140 lines the Zn(2+) pocket. Glutamate 174 (proton acceptor) is an active-site residue. Zn(2+) is bound by residues glutamate 175, aspartate 197, and histidine 379.

The protein belongs to the peptidase M20B family. Zn(2+) serves as cofactor.

Its subcellular location is the cytoplasm. The catalysed reaction is Release of the N-terminal residue from a tripeptide.. Its function is as follows. Cleaves the N-terminal amino acid of tripeptides. This chain is Peptidase T, found in Vibrio cholerae serotype O1 (strain ATCC 39315 / El Tor Inaba N16961).